Consider the following 95-residue polypeptide: Complement inhibitor RaCI5 (95 aa).

The N-terminal stretch at 1 to 21 (MNAVIVLCVTISAVLIHQCYS) is a signal peptide. 3 disulfide bridges follow: Cys-35–Cys-59, Cys-40–Cys-61, and Cys-55–Cys-76.

This sequence belongs to the RaCI family. Expressed in salivary glands.

It is found in the secreted. Its function is as follows. Complement inhibitor. Prevents complement-mediated C5 activation by binding to C5. Binds C5 at a different binding site than the other tick complement inhibitors OmCI and CirpT1, and the drug eculizumab. This chain is Complement inhibitor RaCI5, found in Rhipicephalus appendiculatus (Brown ear tick).